Consider the following 216-residue polypeptide: Invasion protein InvF (216 aa).

Positions 112–210 (YWLVGYLLAQ…GVSPRKLSNI (99 aa)) constitute an HTH araC/xylS-type domain. 2 consecutive DNA-binding regions (H-T-H motif) follow at residues 129–150 (RMLG…SRAL) and 177–200 (ITQL…KELI).

Transcriptional regulator required for the expression of several genes encoding type III secretion system SPI1 effector proteins. The interaction with SicA is necessary for the activation of sigDE (sopB pipC), sicAsipBCDA, and sopE. The protein is Invasion protein InvF (invF) of Salmonella typhi.